We begin with the raw amino-acid sequence, 320 residues long: Cytochrome f (320 aa).

An N-terminal signal peptide occupies residues 1–35; that stretch reads MQNRNTFSWIKEQMTRSISVSIMIYVITRTAISNA. Residues Y36, C56, C59, and H60 each coordinate heme. Residues 286–306 traverse the membrane as a helical segment; sequence VQGLLFFLASVILAQIFLVLK.

The protein belongs to the cytochrome f family. The 4 large subunits of the cytochrome b6-f complex are cytochrome b6, subunit IV (17 kDa polypeptide, petD), cytochrome f and the Rieske protein, while the 4 small subunits are PetG, PetL, PetM and PetN. The complex functions as a dimer. Requires heme as cofactor.

The protein resides in the plastid. The protein localises to the chloroplast thylakoid membrane. In terms of biological role, component of the cytochrome b6-f complex, which mediates electron transfer between photosystem II (PSII) and photosystem I (PSI), cyclic electron flow around PSI, and state transitions. The protein is Cytochrome f of Platanus occidentalis (Sycamore).